The sequence spans 602 residues: Elongation factor 4 (602 aa).

A tr-type G domain is found at 7 to 189; sequence KYIRNFCIIA…KIVDMIPCPE (183 aa). GTP contacts are provided by residues 19–24 and 136–139; these read DHGKST and NKID.

The protein belongs to the TRAFAC class translation factor GTPase superfamily. Classic translation factor GTPase family. LepA subfamily.

It localises to the cell membrane. It catalyses the reaction GTP + H2O = GDP + phosphate + H(+). Functionally, required for accurate and efficient protein synthesis under certain stress conditions. May act as a fidelity factor of the translation reaction, by catalyzing a one-codon backward translocation of tRNAs on improperly translocated ribosomes. Back-translocation proceeds from a post-translocation (POST) complex to a pre-translocation (PRE) complex, thus giving elongation factor G a second chance to translocate the tRNAs correctly. Binds to ribosomes in a GTP-dependent manner. The sequence is that of Elongation factor 4 from Ruminiclostridium cellulolyticum (strain ATCC 35319 / DSM 5812 / JCM 6584 / H10) (Clostridium cellulolyticum).